The primary structure comprises 257 residues: Insulin-induced gene 1 protein (257 aa).

At 1–64 the chain is on the cytoplasmic side; that stretch reads MPRLHDHVWS…ARPGSWHHDL (64 aa). The segment at 32 to 54 is disordered; sequence CPQGSGAPEPAPRSPRAGTAGCG. A helical membrane pass occupies residues 65-87; that stretch reads VQRSLVLFSFGVVLALVLNLLQI. At 88–106 the chain is on the extracellular side; sequence QRNVTLFPDEVIATIFSSA. A helical transmembrane segment spans residues 107–124; that stretch reads WWVPPCCGTAAAVVGLLY. Residues 125–139 lie on the Cytoplasmic side of the membrane; sequence PCIDSHLGEPHKFKR. Glycyl lysine isopeptide (Lys-Gly) (interchain with G-Cter in ubiquitin) cross-links involve residues Lys136 and Lys138. Residues 140–162 form a helical membrane-spanning segment; the sequence is EWASVMRCIAVFVGINHASAKLD. The Extracellular segment spans residues 163-165; it reads FAN. Residues 166-184 traverse the membrane as a helical segment; that stretch reads NVQLSLTLAALSLGLWWTF. The Cytoplasmic portion of the chain corresponds to 185 to 189; sequence DRSRS. Ser187 carries the phosphoserine modification. The chain crosses the membrane as a helical span at residues 190 to 211; the sequence is GLGLGITIAFLATLITQFLVYN. The Extracellular portion of the chain corresponds to 212–225; sequence GVYQYTSPDFLYIR. A helical transmembrane segment spans residues 226–243; sequence SWLPCIFFSGGVTVGNIG. Topologically, residues 244–257 are cytoplasmic; sequence RQLAMGVPEKPHSD. Residues 251 to 257 carry the KxHxx motif; sequence PEKPHSD.

This sequence belongs to the INSIG family. In terms of assembly, interacts with SCAP; interaction is direct and only takes place in the presence of sterols; it prevents interaction between SCAP and the coat protein complex II (COPII). Associates with the SCAP-SREBP complex (composed of SCAP and SREBF1/SREBP1 or SREBF2/SREBP2); association is mediated via its interaction with SCAP and only takes place in the presence of sterols. Interaction with SCAP is mutually exclusive with PAQR3. Interacts with HMGCR (via its SSD); the interaction, accelerated by sterols, leads to the recruitment of HMGCR to AMFR/gp78 for its ubiquitination by the sterol-mediated ERAD pathway. Interacts with AMFR/gp78 (via its membrane domain); the interaction recruits HMCR at the ER membrane for its ubiquitination and degradation by the sterol-mediated ERAD pathway. Interacts with SOAT2/ACAT2; leading to promote recruitment of AMFR/gp78 and subsequent ubiquitination of SOAT2/ACAT2. Interacts with RNF139. Interacts with RNF145. Post-translationally, phosphorylation at Ser-187 by PCK1 reduces binding to oxysterol, disrupting the interaction between INSIG1 and SCAP, thereby promoting nuclear translocation of SREBP proteins (SREBF1/SREBP1 or SREBF2/SREBP2) and subsequent transcription of downstream lipogenesis-related genes. In terms of processing, ubiquitinated by AMFR/gp78 in response to sterol deprivation, leading to its degradation: when the SCAP-SREBP complex becomes dissociated from INSIG1, INSIG1 is then ubiquitinated and degraded in proteasomes. Although ubiquitination is required for rapid INSIG1 degradation, it is not required for release of the SCAP-SREBP complex. Ubiquitinated by RNF139.

The protein resides in the endoplasmic reticulum membrane. Functionally, oxysterol-binding protein that mediates feedback control of cholesterol synthesis by controlling both endoplasmic reticulum to Golgi transport of SCAP and degradation of HMGCR. Acts as a negative regulator of cholesterol biosynthesis by mediating the retention of the SCAP-SREBP complex in the endoplasmic reticulum, thereby blocking the processing of sterol regulatory element-binding proteins (SREBPs) SREBF1/SREBP1 and SREBF2/SREBP2. Binds oxysterol, including 25-hydroxycholesterol, regulating interaction with SCAP and retention of the SCAP-SREBP complex in the endoplasmic reticulum. In presence of oxysterol, interacts with SCAP, retaining the SCAP-SREBP complex in the endoplasmic reticulum, thereby preventing SCAP from escorting SREBF1/SREBP1 and SREBF2/SREBP2 to the Golgi. Sterol deprivation or phosphorylation by PCK1 reduce oxysterol-binding, disrupting the interaction between INSIG1 and SCAP, thereby promoting Golgi transport of the SCAP-SREBP complex, followed by processing and nuclear translocation of SREBF1/SREBP1 and SREBF2/SREBP2. Also regulates cholesterol synthesis by regulating degradation of HMGCR: initiates the sterol-mediated ubiquitin-mediated endoplasmic reticulum-associated degradation (ERAD) of HMGCR via recruitment of the reductase to the ubiquitin ligases AMFR/gp78 and/or RNF139. Also regulates degradation of SOAT2/ACAT2 when the lipid levels are low: initiates the ubiquitin-mediated degradation of SOAT2/ACAT2 via recruitment of the ubiquitin ligases AMFR/gp78. The polypeptide is Insulin-induced gene 1 protein (Cricetulus griseus (Chinese hamster)).